Reading from the N-terminus, the 484-residue chain is Phospholipase A1-Ialpha2, chloroplastic (484 aa).

The transit peptide at 1–63 (MALIQNPNMK…LAPVILNSPV (63 aa)) directs the protein to the chloroplast. Residues 295 to 299 (GHSMG) carry the GXSXG motif. The active-site Acyl-ester intermediate is the serine 297. Catalysis depends on charge relay system residues aspartate 360 and histidine 411.

This sequence belongs to the AB hydrolase superfamily. Lipase family. As to expression, ubiquitous. Highest expression in flowers and leaves.

It localises to the plastid. The protein resides in the chloroplast. The protein localises to the plastoglobule. It carries out the reaction a 1,2-diacyl-3-O-[alpha-D-galactosyl-(1-&gt;6)-beta-D-galactosyl]-sn-glycerol + H2O = acyl-3-O-[alpha-D-galactosyl-(1-&gt;6)-beta-D-galactosyl]-sn-glycerol + a fatty acid + H(+). The enzyme catalyses a 1,2-diacyl-3-O-(beta-D-galactosyl)-sn-glycerol + H2O = an acyl-3-O-(beta-D-galactosyl)-sn-glycerol + a fatty acid + H(+). Acylhydrolase that catalyzes the hydrolysis of phosphatidylcholine at the sn-1 position. Has a strong galactolipase activity toward monogalactosyldiacylglycerol (MGDG) and digalactosyldiacylglycerol (DGDG). Low triacylglycerol (TAG) lipase activity. Plays a role in plant growth and in leaf senescence. The polypeptide is Phospholipase A1-Ialpha2, chloroplastic (Arabidopsis thaliana (Mouse-ear cress)).